The following is a 432-amino-acid chain: Glutamate-1-semialdehyde 2,1-aminomutase 1 (432 aa).

K268 carries the N6-(pyridoxal phosphate)lysine modification.

The protein belongs to the class-III pyridoxal-phosphate-dependent aminotransferase family. HemL subfamily. In terms of assembly, homodimer. Pyridoxal 5'-phosphate serves as cofactor.

Its subcellular location is the cytoplasm. The enzyme catalyses (S)-4-amino-5-oxopentanoate = 5-aminolevulinate. It functions in the pathway porphyrin-containing compound metabolism; protoporphyrin-IX biosynthesis; 5-aminolevulinate from L-glutamyl-tRNA(Glu): step 2/2. The protein is Glutamate-1-semialdehyde 2,1-aminomutase 1 of Bacillus cereus (strain B4264).